Reading from the N-terminus, the 113-residue chain is Histone H2B (113 aa).

Residues 1 to 21 (MPATPAKRAKRVQQEKRHHKK) are disordered. Basic residues predominate over residues 7 to 21 (KRAKRVQQEKRHHKK). Residue K109 forms a Glycyl lysine isopeptide (Lys-Gly) (interchain with G-Cter in ubiquitin) linkage.

The protein belongs to the histone H2B family. In terms of assembly, the nucleosome is a histone octamer containing two molecules each of H2A, H2B, H3 and H4 assembled in one H3-H4 heterotetramer and two H2A-H2B heterodimers. The octamer wraps approximately 147 bp of DNA. In terms of processing, monoubiquitination of Lys-109 gives a specific tag for epigenetic transcriptional activation and is also prerequisite for histone H3 'Lys-4' and 'Lys-79' methylation.

The protein resides in the nucleus. It is found in the chromosome. Functionally, core component of nucleosome. Nucleosomes wrap and compact DNA into chromatin, limiting DNA accessibility to the cellular machineries which require DNA as a template. Histones thereby play a central role in transcription regulation, DNA repair, DNA replication and chromosomal stability. DNA accessibility is regulated via a complex set of post-translational modifications of histones, also called histone code, and nucleosome remodeling. In Euplotes crassus, this protein is Histone H2B (H2B1).